We begin with the raw amino-acid sequence, 623 residues long: mRNA-capping enzyme (623 aa).

Positions 13-224 (MGLPDRWLHC…IDNGRPSTSQ (212 aa)) are TPase. Residues 44 to 196 (YDNQIAERRY…YDPTEDDKIL (153 aa)) enclose the Tyrosine-protein phosphatase domain. The Phosphocysteine intermediate role is filled by Cys-136. A compositionally biased stretch (polar residues) spans 213–229 (TQIDNGRPSTSQQIPAT). The segment at 213–243 (TQIDNGRPSTSQQIPATNGNNNQNGNQLSGG) is disordered. Residues 230–239 (NGNNNQNGNQ) show a composition bias toward low complexity. The segment at 241–585 (SGGGDNSKLF…NPVTETYLIE (345 aa)) is GTase. The active-site N6-GMP-lysine intermediate is Lys-311. GTP-binding positions include Arg-316, Arg-331, 357–359 (DTE), 477–479 (KWK), and 553–558 (RERTDK). A disordered region spans residues 603 to 623 (HHQIHQQQLHEGEPEARRQKL). The segment covering 610–623 (QLHEGEPEARRQKL) has biased composition (basic and acidic residues).

This sequence in the N-terminal section; belongs to the non-receptor class of the protein-tyrosine phosphatase family. The protein in the C-terminal section; belongs to the eukaryotic GTase family.

The protein localises to the nucleus. It carries out the reaction a 5'-end triphospho-ribonucleoside in mRNA + H2O = a 5'-end diphospho-ribonucleoside in mRNA + phosphate + H(+). The catalysed reaction is a 5'-end diphospho-ribonucleoside in mRNA + GTP + H(+) = a 5'-end (5'-triphosphoguanosine)-ribonucleoside in mRNA + diphosphate. With respect to regulation, RNA triphosphatase activity is inhibited by magnesium. Its function is as follows. Bifunctional mRNA-capping enzyme exhibiting RNA 5'-triphosphate monophosphatase activity in the N-terminal part and mRNA guanylyltransferase activity in the C-terminal part. Catalyzes the first two steps of cap formation: by removing the gamma-phosphate from the 5'-triphosphate end of nascent mRNA to yield a diphosphate end, and by transferring the GMP moiety of GTP to the 5'-diphosphate terminus via a covalent enzyme-GMP reaction intermediate. This Caenorhabditis elegans protein is mRNA-capping enzyme (cel-1).